The following is a 112-amino-acid chain: Protein preY, mitochondrial (112 aa).

Residues 1 to 34 (MLTTTCRRLSQALQRPHALSAVAQRCLRAPGARS) constitute a mitochondrion transit peptide. In terms of domain architecture, TRM112 spans 49–95 (HPALLQFLVCPLSKKPLRYDASTNELINDELGIAYPIIDGVPNMIPQ).

This sequence belongs to the PREY family. In terms of assembly, interacts (via TRM112 domain) with NDUFAF5; the interaction is direct and stabilizes NDUFAF5 protein. Interacts with COQ5; the interaction is direct, stabilizes COQ5 protein and associates PYURF with COQ enzyme complex.

The protein localises to the mitochondrion. Its function is as follows. In mitochondria, S-adenosylmethionine-dependent methyltransferase chaperone that supports both coenzyme Q biosynthesis, by stabilizing its components, such as COQ5, and NADH:ubiquinone oxidoreductase complex (complex I, MT-ND1) assembly, by stabilizing complex I assembly factors, such as NDUFAF5. The sequence is that of Protein preY, mitochondrial (Pyurf) from Rattus norvegicus (Rat).